The primary structure comprises 111 residues: Ribulose bisphosphate carboxylase small subunit (111 aa).

It belongs to the RuBisCO small chain family. Heterohexadecamer of 8 large and 8 small subunits. The CcmM short form purifies from carboxysomes in complex with both RuBisCO subunits; a second complex with full-length CcmM and RuBisCO also includes carbonic anhydrase (CA, ccaA). RuBisCO-CcmM complexes are probably associated with the carboxysome shell. Isolated reduced and oxidized SSUL1 binds holo-RuBisCO (RbcL(8)-RbcS(8)) but not either subunit octamer alone; RuBisCO has a higher affinity for reduced SSUL1.

It is found in the carboxysome. Functionally, ruBisCO catalyzes two reactions: the carboxylation of D-ribulose 1,5-bisphosphate, the primary event in carbon dioxide fixation, as well as the oxidative fragmentation of the pentose substrate in the photorespiration process. Both reactions occur simultaneously and in competition at the same active site. Its function is as follows. Beta-carboxysome assembly initiates when soluble RuBisCO aggregates is condensed into a liquid matrix in a pre-carboxysome by the RbcS-like domains of probably both CcmM58 and CcmM35. CcmN interacts with the N-terminus of CcmM58, and then recruits the CcmK2 major shell protein via CcmN's encapsulation peptide. Shell formation requires CcmK proteins and CcmO. CcmL caps the otherwise elongated carboxysome. Once fully encapsulated carboxysomes are formed, they migrate within the cell probably via interactions with the cytoskeleton. In Synechococcus elongatus (strain ATCC 33912 / PCC 7942 / FACHB-805) (Anacystis nidulans R2), this protein is Ribulose bisphosphate carboxylase small subunit.